We begin with the raw amino-acid sequence, 118 residues long: Small ribosomal subunit protein uS13 (118 aa).

The disordered stretch occupies residues 92–118 (RRSLPVRGQRTKTNARTRKGPRKPIKK).

It belongs to the universal ribosomal protein uS13 family. Part of the 30S ribosomal subunit. Forms a loose heterodimer with protein S19. Forms two bridges to the 50S subunit in the 70S ribosome.

Located at the top of the head of the 30S subunit, it contacts several helices of the 16S rRNA. In the 70S ribosome it contacts the 23S rRNA (bridge B1a) and protein L5 of the 50S subunit (bridge B1b), connecting the 2 subunits; these bridges are implicated in subunit movement. Contacts the tRNAs in the A and P-sites. This chain is Small ribosomal subunit protein uS13, found in Acinetobacter baumannii (strain AB307-0294).